Here is a 233-residue protein sequence, read N- to C-terminus: Eosinophil granule major basic protein 1 (233 aa).

The signal sequence occupies residues 1–15 (MKLLLLLALLLGAVS). A propeptide spans 16–114 (TRHLKVDTSS…VKFFSRPGYK (99 aa)) (acidic). Positions 24 to 96 (SSLQSLRGEE…SELDVSPEDI (73 aa)) are disordered. The segment covering 42-57 (AEGATREATAGALMPL) has biased composition (low complexity). The segment covering 58 to 93 (PEEEEMEGASGSEDDPEEEEEEEEEVEFSSELDVSP) has biased composition (acidic residues). Residues 132 to 233 (WVCQRCYRGN…GKRRPFVCTY (102 aa)) form the C-type lectin domain. Cystine bridges form between cysteine 134–cysteine 231 and cysteine 208–cysteine 223.

In terms of processing, nitrated.

The protein localises to the cytoplasmic granule. MBP may play some important roles in the allergic reactions and inflammations, since MBP is capable of releasing histamine from mast cells and damaging the epithelial cells of bronchial tubes. Antiparasitic and antibiotic. The protein is Eosinophil granule major basic protein 1 (MBP1) of Cavia porcellus (Guinea pig).